The chain runs to 201 residues: Pyridoxal 5'-phosphate synthase subunit PdxT (201 aa).

50–52 (GES) provides a ligand contact to L-glutamine. C82 functions as the Nucleophile in the catalytic mechanism. Residues R111 and 139–140 (IR) contribute to the L-glutamine site. Residues H180 and E182 each act as charge relay system in the active site.

This sequence belongs to the glutaminase PdxT/SNO family. In terms of assembly, in the presence of PdxS, forms a dodecamer of heterodimers. Only shows activity in the heterodimer.

It carries out the reaction aldehydo-D-ribose 5-phosphate + D-glyceraldehyde 3-phosphate + L-glutamine = pyridoxal 5'-phosphate + L-glutamate + phosphate + 3 H2O + H(+). It catalyses the reaction L-glutamine + H2O = L-glutamate + NH4(+). It functions in the pathway cofactor biosynthesis; pyridoxal 5'-phosphate biosynthesis. In terms of biological role, catalyzes the hydrolysis of glutamine to glutamate and ammonia as part of the biosynthesis of pyridoxal 5'-phosphate. The resulting ammonia molecule is channeled to the active site of PdxS. The polypeptide is Pyridoxal 5'-phosphate synthase subunit PdxT (Nocardioides sp. (strain ATCC BAA-499 / JS614)).